A 389-amino-acid polypeptide reads, in one-letter code: Putative teichuronic acid biosynthesis glycosyltransferase TuaC (389 aa).

This sequence belongs to the glycosyltransferase group 1 family. Glycosyltransferase 4 subfamily.

Its pathway is cell wall biogenesis; teichuronic acid biosynthesis. This chain is Putative teichuronic acid biosynthesis glycosyltransferase TuaC (tuaC), found in Bacillus subtilis (strain 168).